The chain runs to 224 residues: Pro-thyrotropin-releasing hormone-B (224 aa).

An N-terminal signal peptide occupies residues 1 to 15; sequence MMFLWWLLLLGTAIS. Position 75 is a pyrrolidone carboxylic acid (Gln75). Pro77 is subject to Proline amide. The span at 86–101 shows a compositional bias: basic and acidic residues; it reads EKRQHPGKRDLEDLQL. Disordered stretches follow at residues 86 to 131 and 150 to 212; these read EKRQ…DWSR and RQHP…NSGN. Gln89 is modified (pyrrolidone carboxylic acid). Pro91 is subject to Proline amide. Gln105 carries the pyrrolidone carboxylic acid modification. Proline amide is present on Pro107. A compositionally biased stretch (basic and acidic residues) spans 110–129; the sequence is RYLEDMEKRQHPGKREEGDW. Pyrrolidone carboxylic acid is present on Gln119. Position 121 is a proline amide (Pro121). Gln151 carries the pyrrolidone carboxylic acid modification. Pro153 is subject to Proline amide. Gln166 is subject to Pyrrolidone carboxylic acid. Pro168 bears the Proline amide mark. The segment covering 182 to 199 has biased composition (basic and acidic residues); it reads ENSKEVGKRQHPGKRYDP. Residue Gln191 is modified to Pyrrolidone carboxylic acid. Pro193 carries the proline amide modification.

Belongs to the TRH family.

It is found in the secreted. The sequence is that of Pro-thyrotropin-releasing hormone-B (trh-b) from Xenopus laevis (African clawed frog).